Consider the following 338-residue polypeptide: Malate dehydrogenase, mitochondrial (338 aa).

A mitochondrion-targeting transit peptide spans 1–24 (MLSALARPAGAALRRSFSTSXQNN). Residues 31 to 37 (GASGGIG) and Asp-57 contribute to the NAD(+) site. O-linked (GlcNAc) serine glycosylation occurs at Ser-33. Residues Lys-78 and Lys-91 each carry the N6-acetyllysine; alternate modification. N6-succinyllysine; alternate is present on residues Lys-78 and Lys-91. Substrate is bound by residues Arg-104 and Arg-110. NAD(+)-binding positions include Asn-117 and 140–142 (ISN). Asn-142 serves as a coordination point for substrate. Position 165 is an N6-acetyllysine (Lys-165). Arg-176 is a binding site for substrate. The residue at position 185 (Lys-185) is an N6-acetyllysine; alternate. An N6-succinyllysine; alternate modification is found at Lys-185. The active-site Proton acceptor is the His-200. An N6-succinyllysine modification is found at Lys-203. 2 positions are modified to N6-acetyllysine; alternate: Lys-215 and Lys-239. An N6-succinyllysine; alternate mark is found at Lys-215 and Lys-239. Position 239 is an N6-malonyllysine; alternate (Lys-239). Residue Ser-246 is modified to Phosphoserine. Met-251 contacts NAD(+). Lys-269 bears the N6-succinyllysine mark. N6-acetyllysine; alternate occurs at positions 296, 301, 307, 314, and 324. N6-succinyllysine; alternate occurs at positions 296, 301, 307, 314, and 324. Position 307 is an N6-malonyllysine; alternate (Lys-307). At Ser-326 the chain carries Phosphoserine. Lys-328, Lys-329, and Lys-335 each carry N6-acetyllysine; alternate. Residue Lys-328 is modified to N6-succinyllysine; alternate. Lys-329 is modified (N6-malonyllysine; alternate). Lys-335 bears the N6-succinyllysine; alternate mark.

It belongs to the LDH/MDH superfamily. MDH type 1 family. As to quaternary structure, homodimer. Acetylation is enhanced after treatment either with trichostin A (TCA) or with nicotinamide (NAM) with the appearance of tri- and tetraacetylations. Glucose also increases acetylation.

It localises to the mitochondrion matrix. The catalysed reaction is (S)-malate + NAD(+) = oxaloacetate + NADH + H(+). With respect to regulation, enzyme activity is enhanced by acetylation. The protein is Malate dehydrogenase, mitochondrial (MDH2) of Sus scrofa (Pig).